A 147-amino-acid chain; its full sequence is Ribosome maturation factor RimP (147 aa).

This sequence belongs to the RimP family.

The protein localises to the cytoplasm. Required for maturation of 30S ribosomal subunits. The chain is Ribosome maturation factor RimP from Sulfurihydrogenibium azorense (strain DSM 15241 / OCM 825 / Az-Fu1).